The primary structure comprises 261 residues: (R)-S-adenosyl-L-methionine hydrolase (261 aa).

Residues Asp12, Asp72, and Asn187 each coordinate adenosine. (R)-S-adenosyl-L-methionine-binding residues include Asn187, Ser231, and Val239. Val239 is a binding site for adenosine.

The protein belongs to the SAM hydrolase / SAM-dependent halogenase family.

It carries out the reaction (R)-S-adenosyl-L-methionine + H2O = adenosine + L-methionine + H(+). Activity is inhibited by chloride. Its function is as follows. Catalyzes the hydrolysis of S-adenosyl-L-methionine (SAM) into adenosine and L-methionine. Is likely stereoselective, specifically hydrolyzing (R)-S-adenosyl-L-methionine ((R)-SAM), the inactive form of the ubiquitous cofactor SAM, and not the active form of SAM, (S)-S-adenosyl-L-methionine. Probaly plays a role in preventing accumulation of (R)-S-adenosyl-L-methionine in cells; maintenance of (S)-S-denosyl-L-methionine homochirality is important for cellular health given that the (R)-form is largely inactive as a methyl donor and can function as an inhibitor of methyltransferases. Shows very slow iodinase activity in vitro. The polypeptide is (R)-S-adenosyl-L-methionine hydrolase (Salinispora arenicola (strain CNS-205)).